We begin with the raw amino-acid sequence, 230 residues long: Ureidoacrylate amidohydrolase RutB (230 aa).

D24 (proton acceptor) is an active-site residue. K133 is an active-site residue. C166 serves as the catalytic Nucleophile.

This sequence belongs to the isochorismatase family. RutB subfamily.

The enzyme catalyses (Z)-3-ureidoacrylate + H2O + H(+) = (Z)-3-aminoacrylate + NH4(+) + CO2. The catalysed reaction is (Z)-3-ureidoacrylate + H2O = (Z)-3-aminoacrylate + carbamate + H(+). It carries out the reaction (Z)-2-methylureidoacrylate + H2O + H(+) = (Z)-2-methylaminoacrylate + NH4(+) + CO2. Hydrolyzes ureidoacrylate to form aminoacrylate and carbamate. The carbamate hydrolyzes spontaneously, thereby releasing one of the nitrogen atoms of the pyrimidine ring as ammonia and one of its carbon atoms as CO2. This is Ureidoacrylate amidohydrolase RutB from Escherichia coli O81 (strain ED1a).